Here is a 1224-residue protein sequence, read N- to C-terminus: Protein MSN5 (1224 aa).

The segment at 1200–1224 is disordered; it reads NKENGDMLDDPNIEDGAVGNLFDDN.

In terms of assembly, interacts with CEX1.

This is Protein MSN5 (MSN5) from Saccharomyces cerevisiae (strain ATCC 204508 / S288c) (Baker's yeast).